Reading from the N-terminus, the 396-residue chain is Tryptophan synthase beta chain (396 aa).

K86 carries the post-translational modification N6-(pyridoxal phosphate)lysine.

It belongs to the TrpB family. In terms of assembly, tetramer of two alpha and two beta chains. Requires pyridoxal 5'-phosphate as cofactor.

It carries out the reaction (1S,2R)-1-C-(indol-3-yl)glycerol 3-phosphate + L-serine = D-glyceraldehyde 3-phosphate + L-tryptophan + H2O. It participates in amino-acid biosynthesis; L-tryptophan biosynthesis; L-tryptophan from chorismate: step 5/5. Functionally, the beta subunit is responsible for the synthesis of L-tryptophan from indole and L-serine. This chain is Tryptophan synthase beta chain, found in Vibrio cholerae serotype O1 (strain ATCC 39315 / El Tor Inaba N16961).